The chain runs to 367 residues: UDP-N-acetylglucosamine--N-acetylmuramyl-(pentapeptide) pyrophosphoryl-undecaprenol N-acetylglucosamine transferase (367 aa).

UDP-N-acetyl-alpha-D-glucosamine is bound by residues 15–17 (TGG), asparagine 127, arginine 163, serine 191, isoleucine 249, and glutamine 294.

Belongs to the glycosyltransferase 28 family. MurG subfamily.

The protein resides in the cell inner membrane. It catalyses the reaction di-trans,octa-cis-undecaprenyl diphospho-N-acetyl-alpha-D-muramoyl-L-alanyl-D-glutamyl-meso-2,6-diaminopimeloyl-D-alanyl-D-alanine + UDP-N-acetyl-alpha-D-glucosamine = di-trans,octa-cis-undecaprenyl diphospho-[N-acetyl-alpha-D-glucosaminyl-(1-&gt;4)]-N-acetyl-alpha-D-muramoyl-L-alanyl-D-glutamyl-meso-2,6-diaminopimeloyl-D-alanyl-D-alanine + UDP + H(+). The protein operates within cell wall biogenesis; peptidoglycan biosynthesis. Its function is as follows. Cell wall formation. Catalyzes the transfer of a GlcNAc subunit on undecaprenyl-pyrophosphoryl-MurNAc-pentapeptide (lipid intermediate I) to form undecaprenyl-pyrophosphoryl-MurNAc-(pentapeptide)GlcNAc (lipid intermediate II). The protein is UDP-N-acetylglucosamine--N-acetylmuramyl-(pentapeptide) pyrophosphoryl-undecaprenol N-acetylglucosamine transferase of Burkholderia pseudomallei (strain 1106a).